Here is a 210-residue protein sequence, read N- to C-terminus: 3-hexulose-6-phosphate synthase (210 aa).

It belongs to the HPS/KGPDC family. HPS subfamily.

It carries out the reaction D-ribulose 5-phosphate + formaldehyde = D-arabino-hex-3-ulose 6-phosphate. Its pathway is one-carbon metabolism; formaldehyde assimilation via RuMP pathway; D-fructose 6-phosphate from D-ribulose 5-phosphate and formaldehyde: step 1/2. Catalyzes the condensation of ribulose 5-phosphate with formaldehyde to form 3-hexulose 6-phosphate. The chain is 3-hexulose-6-phosphate synthase from Staphylococcus aureus (strain USA300).